We begin with the raw amino-acid sequence, 224 residues long: ATP synthase subunit a (224 aa).

Helical transmembrane passes span 17–37 (FSLN…IYWL), 72–92 (IFIS…FPYI), 99–119 (LTLT…YGWI), 125–145 (MFAH…MVCI), 166–186 (IAGH…SYIL), and 187–207 (VTFL…VAMI).

Belongs to the ATPase A chain family. As to quaternary structure, F-type ATPases have 2 components, CF(1) - the catalytic core - and CF(0) - the membrane proton channel. CF(1) has five subunits: alpha(3), beta(3), gamma(1), delta(1), epsilon(1). CF(0) has three main subunits: a, b and c.

The protein localises to the mitochondrion inner membrane. Its function is as follows. Mitochondrial membrane ATP synthase (F(1)F(0) ATP synthase or Complex V) produces ATP from ADP in the presence of a proton gradient across the membrane which is generated by electron transport complexes of the respiratory chain. F-type ATPases consist of two structural domains, F(1) - containing the extramembraneous catalytic core and F(0) - containing the membrane proton channel, linked together by a central stalk and a peripheral stalk. During catalysis, ATP synthesis in the catalytic domain of F(1) is coupled via a rotary mechanism of the central stalk subunits to proton translocation. Key component of the proton channel; it may play a direct role in the translocation of protons across the membrane. This chain is ATP synthase subunit a (mt:ATPase6), found in Drosophila melanogaster (Fruit fly).